We begin with the raw amino-acid sequence, 676 residues long: Envelope glycoprotein (676 aa).

An N-terminal signal peptide occupies residues 1-32 (MGVTGILQLPRDRFKRTSFFLWVIILFQRTFS). Over 33-650 (IPLGVIHNST…NDNWWTGWRQ (618 aa)) the chain is Extracellular. A glycan (N-linked (GlcNAc...) asparagine; by host) is linked at asparagine 40. Intrachain disulfides connect cysteine 53-cysteine 609, cysteine 108-cysteine 135, cysteine 121-cysteine 147, cysteine 511-cysteine 556, and cysteine 601-cysteine 608. Residues 54–201 (RDKLSSTNQL…DFFSSHPLRE (148 aa)) form a receptor-binding region. N-linked (GlcNAc...) asparagine; by host glycosylation is found at asparagine 204, asparagine 228, asparagine 238, asparagine 257, asparagine 268, asparagine 296, asparagine 317, asparagine 333, asparagine 346, asparagine 386, and asparagine 413. A mucin-like region region spans residues 305–485 (ELSFTVVSNG…SGKLGLITNT (181 aa)). A compositionally biased stretch (polar residues) spans 315 to 335 (AKNISGQSPARTSSDPGTNTT). A disordered region spans residues 315–337 (AKNISGQSPARTSSDPGTNTTTE). Polar residues predominate over residues 373–391 (TSPQSLTTKPGPDNSTHNT). Disordered stretches follow at residues 373–392 (TSPQ…HNTP) and 402–479 (TQVE…SGKL). Positions 414–432 (DSTASDTPSATTAAGPPKA) are enriched in low complexity. The span at 433-464 (ENTNTSKSTDFLDPATTTSPQNHSETAGNNNT) shows a compositional bias: polar residues. N-linked (GlcNAc...) asparagine; by host glycosylation is found at asparagine 436, asparagine 454, and asparagine 462. The tract at residues 524 to 539 (GAAIGLAWIPYFGPAA) is fusion peptide. Residues 554 to 595 (LICGLRQLANETTQALQLFLRATTELRTFSILNRKAIDFLLQ) are a coiled coil. Residue asparagine 563 is glycosylated (N-linked (GlcNAc...) asparagine; by host). The stretch at 615–634 (WTKNITDKIDQIIHDFVDKT) forms a coiled coil. Asparagine 618 carries N-linked (GlcNAc...) asparagine; by host glycosylation. The helical transmembrane segment at 651–671 (WIPAGIGVTGVIIAVIALFCI) threads the bilayer. 2 S-palmitoyl cysteine; by host lipidation sites follow: cysteine 670 and cysteine 672. The Cytoplasmic segment spans residues 672–676 (CKFVF).

This sequence belongs to the filoviruses glycoprotein family. Homotrimer; each monomer consists of a GP1 and a GP2 subunit linked by disulfide bonds. The resulting peplomers (GP1,2) protrude from the virus surface as spikes. Interacts with host integrin alpha-V/ITGAV. Interacts with host CLEC10A. Binds also to host CD209 and CLEC4M/DC-SIGN(R). Interacts with host FOLR1. Interacts with BST2; this interaction inhibits the antiviral effect of BST2 and this allows viral release from infected cells. Interacts with host FCN1; this interaction enhances viral entry. Interacts with host TLR4; this interaction induces cell death in T-lymphocytes or proinflammatory cytokines and SOCS1 production in monocytes. In terms of assembly, interacts with host entry receptor NPC1. As to quaternary structure, GP1 and GP2delta are part of GP1,2delta soluble complexes released by ectodomain shedding. In terms of processing, the signal peptide region modulates GP's high mannose glycosylation, thereby determining the efficiency of the interactions with DC-SIGN(R). N-glycosylated. Post-translationally, O-glycosylated in the mucin-like region. In terms of processing, palmitoylation of GP2 is not required for its function. Specific enzymatic cleavages in vivo yield mature proteins. The precursor is processed into GP1 and GP2 by host cell furin in the trans Golgi, and maybe by other host proteases, to yield the mature GP1 and GP2 proteins. The cleavage site corresponds to the furin optimal cleavage sequence [KR]-X-[KR]-R. This cleavage does not seem to be required for function. After the internalization of the virus into cell endosomes, GP1 C-terminus is removed by the endosomal proteases cathepsin B, cathepsin L, or both, leaving a 19-kDa N-terminal fragment which is further digested by cathepsin B. Proteolytic processing of GP1,2 by host ADAM17 can remove the transmembrane anchor of GP2 and leads to shedding of complexes consisting in GP1 and truncated GP2 (GP1,2delta).

The protein localises to the virion membrane. It localises to the host cell membrane. It is found in the secreted. Functionally, trimeric GP1,2 complexes form the virion surface spikes and mediate the viral entry processes, with GP1 acting as the receptor-binding subunit and GP2 as the membrane fusion subunit. At later times of infection, down-regulates the expression of various host cell surface molecules that are essential for immune surveillance and cell adhesion. Down-modulates several integrins including ITGA1, ITGA2, ITGA3, ITGA4, ITGA5, ITGA6, ITGAV and ITGB1. This decrease in cell adhesion molecules may lead to cell detachment, contributing to the disruption of blood vessel integrity and hemorrhages developed during infection (cytotoxicity). Interacts with host TLR4 and thereby stimulates the differentiation and activation of monocytes leading to bystander death of T-lymphocytes. Down-regulates as well the function of host natural killer cells. Counteracts the antiviral effect of host BST2/tetherin that restricts release of progeny virions from infected cells. However, cooperates with VP40 and host BST2 to activate canonical NF-kappa-B pathway in a manner dependent on neddylation. In terms of biological role, functions as a decoy for anti-GP1,2 antibodies thereby contributing to viral immune evasion. Interacts and activates host macrophages and dendritic cells inducing up-regulation of cytokine transcription. This effect is mediated throught activation of host TLR4. Its function is as follows. Responsible for binding to the receptor(s) on target cells. Interacts with CD209/DC-SIGN and CLEC4M/DC-SIGNR which act as cofactors for virus entry into dendritic cells (DCs) and endothelial cells. Binding to the macrophage specific lectin CLEC10A also seems to enhance virus infectivity. Interaction with FOLR1/folate receptor alpha may be a cofactor for virus entry in some cell types, although results are contradictory. Members of the Tyro3 receptor tyrosine kinase family also seem to be cell entry factors in filovirus infection. Once attached, the virions are internalized through clathrin-dependent endocytosis and/or macropinocytosis. After internalization of the virus into the endosomes of the host cell, proteolysis of GP1 by two cysteine proteases, CTSB/cathepsin B and CTSL/cathepsin L removes the glycan cap and allows GP1 binding to the host entry receptor NPC1. NPC1-binding, Ca(2+) and acidic pH induce a conformational change of GP2, which unmasks its fusion peptide and permit membranes fusion. Acts as a class I viral fusion protein. Under the current model, the protein has at least 3 conformational states: pre-fusion native state, pre-hairpin intermediate state, and post-fusion hairpin state. During viral and target cell membrane fusion, the coiled coil regions (heptad repeats) assume a trimer-of-hairpins structure, positioning the fusion peptide in close proximity to the C-terminal region of the ectodomain. The formation of this structure appears to drive apposition and subsequent fusion of viral and target cell membranes. Responsible for penetration of the virus into the cell cytoplasm by mediating the fusion of the membrane of the endocytosed virus particle with the endosomal membrane. Low pH in endosomes induces an irreversible conformational change in GP2, releasing the fusion hydrophobic peptide. In Epomops franqueti (Franquet's epauletted fruit bat), this protein is Envelope glycoprotein (GP).